The following is a 404-amino-acid chain: Propionate kinase (404 aa).

It belongs to the acetokinase family. PduW subfamily.

The protein localises to the cytoplasm. The enzyme catalyses propanoate + ATP = propanoyl phosphate + ADP. The protein operates within polyol metabolism; 1,2-propanediol degradation. Its function is as follows. Works with phosphate acetyltransferase (pta) to capture exogenous propionate and regenerate propionyl-CoA during degradation of 1,2-propanediol (1,2-PD). This is Propionate kinase from Citrobacter koseri (strain ATCC BAA-895 / CDC 4225-83 / SGSC4696).